A 304-amino-acid polypeptide reads, in one-letter code: Protein YIF1B (304 aa).

The Cytoplasmic portion of the chain corresponds to 1–146; that stretch reads MMEYPNQSGF…APRFDINAPD (146 aa). Positions 21–54 are disordered; sequence MRGSAMEPSDPTQLFDDTSSGVNKHEPGRVGKSP. Over residues 30–42 the composition is skewed to polar residues; sequence DPTQLFDDTSSGV. Residues 147-167 traverse the membrane as a helical segment; sequence LYIPVMGFITYVLVAGLALGT. Residues 168–182 lie on the Extracellular side of the membrane; sequence QNRFSPEILGIQASS. A helical transmembrane segment spans residues 183–203; sequence ALVWLIIEVLAVLLSLYLVTV. Topologically, residues 204 to 212 are cytoplasmic; that stretch reads NTDLTTIDL. Residues 213–233 traverse the membrane as a helical segment; the sequence is VAFSGYKYVGMIVGVVAGLLF. At 234-236 the chain is on the extracellular side; the sequence is GRT. Residues 237-257 traverse the membrane as a helical segment; that stretch reads GYYLALLWFCASIFVFTIRTL. Residues 258-282 are Cytoplasmic-facing; it reads RLKILSEAAAEGRLVRGTKNQLRMY. The helical transmembrane segment at 283-303 threads the bilayer; the sequence is LTMAIAAAQPVFMYWLTFHLV. A topological domain (extracellular) is located at residue R304.

It belongs to the YIF1 family.

The protein localises to the endoplasmic reticulum membrane. Its subcellular location is the golgi apparatus membrane. It is found in the endoplasmic reticulum-Golgi intermediate compartment membrane. Its function is as follows. Functions in endoplasmic reticulum to Golgi vesicle-mediated transport and regulates the proper organization of the endoplasmic reticulum and the Golgi. Plays a key role in targeting to neuronal dendrites receptors such as HTR1A. Plays also a role in primary cilium and sperm flagellum assembly probably through protein transport to these compartments. The protein is Protein YIF1B (yif1b) of Danio rerio (Zebrafish).